We begin with the raw amino-acid sequence, 595 residues long: Alginate biosynthesis sensor protein KinB (595 aa).

Residues 1-12 (MSMPLPMKLRTR) are Cytoplasmic-facing. Residues 13–33 (LFLSISALITVSLFGLLLGLF) traverse the membrane as a helical segment. At 34-167 (SVMQLGRAQE…SDAETSARHR (134 aa)) the chain is on the periplasmic side. A helical transmembrane segment spans residues 168–188 (AYLVAGLLGLVGVAILLIGFV). The Cytoplasmic segment spans residues 189–595 (TAHSIARRFG…GARFYMLLPV (407 aa)). Residues 195–247 (RRFGAPIETLARAADRIGEGDFDVTLPMTNVAEVGQLTRRFGLMAEALRQYRK) form the HAMP domain. Positions 258–323 (RRLQAVLDSI…AVEKALLGEV (66 aa)) constitute a PAS domain. The region spanning 327-369 (AMPDLVVDVAGESRLLAWSLYPVTHPGGHSVGAVLVVRDVTEQ) is the PAC domain. One can recognise a Histidine kinase domain in the interval 382-595 (RASHELRTPV…GARFYMLLPV (214 aa)). His385 carries the phosphohistidine; by autocatalysis modification.

In terms of processing, autophosphorylated.

It localises to the cell inner membrane. The catalysed reaction is ATP + protein L-histidine = ADP + protein N-phospho-L-histidine.. Functionally, member of the two-component regulatory system AlgB/KinB involved in regulation of alginate biosynthesis genes. KinB functions as a membrane-associated protein kinase that phosphorylates AlgB, probably in response to environmental signals. This Pseudomonas aeruginosa protein is Alginate biosynthesis sensor protein KinB (kinB).